The primary structure comprises 498 residues: MKTIQFDMNKYETHVDLEYLKEHGRVEKISDGVIFCSGLENAALHQAVLIDERHRGVILELNEEFVGIGLIDKTSDILEGMNVSVTDHFIEVNLFDDMAGRIIDTTGKMLYEESEEQPTSSSPLFRVTPEIMTIDSVTRPLNTGLAVIDSITPIGRGQRQLILGNRQSGKTQIAVDTIINQHDQNVHCIYVAIGLKAAYIAEVIETLRNHDALKYSTVVATAASDSLTAQYLTPYAGMAVAEALREQGKDVLIIFDDLTKHADAYRAITLLFNRPPGREAYPGDSFYIHSSLLERAVQMNPEHGGGSITALPMIETLSDDVTAYIPTNVISITDGQLFLKSDLFNRGQKPAVDVGVSVSRIGGDAQHPIIRKLSKNLTLILSQFEELKELLDFGNGLDEGSMKMVTDGRILTELFKQKILSPLSVTDLIVILYAFQNGFLTKVPPAKIESFKGLLLEKAHARNDFIAFSNDIKDISELSDAHTKMLEEIIQEVGRLFS.

164–171 contacts ATP; sequence GNRQSGKT.

This sequence belongs to the ATPase alpha/beta chains family. F-type ATPases have 2 components, CF(1) - the catalytic core - and CF(0) - the membrane proton channel. CF(1) has five subunits: alpha(3), beta(3), gamma(1), delta(1), epsilon(1). CF(0) has three main subunits: a(1), b(2) and c(9-12). The alpha and beta chains form an alternating ring which encloses part of the gamma chain. CF(1) is attached to CF(0) by a central stalk formed by the gamma and epsilon chains, while a peripheral stalk is formed by the delta and b chains.

It is found in the cell membrane. The catalysed reaction is ATP + H2O + 4 H(+)(in) = ADP + phosphate + 5 H(+)(out). Functionally, produces ATP from ADP in the presence of a proton gradient across the membrane. The alpha chain is a regulatory subunit. The polypeptide is ATP synthase subunit alpha 1 (Listeria welshimeri serovar 6b (strain ATCC 35897 / DSM 20650 / CCUG 15529 / CIP 8149 / NCTC 11857 / SLCC 5334 / V8)).